Consider the following 247-residue polypeptide: uncharacterized protein (247 aa).

Residues Leu11, Asn85, and Lys119 each contribute to the NADP(+) site. Ser136 serves as the catalytic Proton donor. 4 residues coordinate NADP(+): Tyr150, Lys154, Val181, and Thr183. Tyr150 acts as the Proton acceptor in catalysis. Lys154 acts as the Lowers pKa of active site Tyr in catalysis.

This sequence belongs to the short-chain dehydrogenases/reductases (SDR) family.

This is an uncharacterized protein from Schizosaccharomyces pombe (strain 972 / ATCC 24843) (Fission yeast).